The following is a 389-amino-acid chain: Formate-dependent phosphoribosylglycinamide formyltransferase (389 aa).

N(1)-(5-phospho-beta-D-ribosyl)glycinamide contacts are provided by residues 12–13 (EL) and Glu-72. Residues Arg-104, Lys-145, 150 to 155 (SSGKGQ), 185 to 188 (EAFV), and Glu-193 each bind ATP. Residues 109 to 300 (DLASKELGLR…EFELHARAVL (192 aa)) form the ATP-grasp domain. Mg(2+) contacts are provided by Glu-258 and Glu-270. N(1)-(5-phospho-beta-D-ribosyl)glycinamide-binding positions include Asp-277, Lys-348, and 355 to 356 (RR).

Belongs to the PurK/PurT family. Homodimer.

The enzyme catalyses N(1)-(5-phospho-beta-D-ribosyl)glycinamide + formate + ATP = N(2)-formyl-N(1)-(5-phospho-beta-D-ribosyl)glycinamide + ADP + phosphate + H(+). It functions in the pathway purine metabolism; IMP biosynthesis via de novo pathway; N(2)-formyl-N(1)-(5-phospho-D-ribosyl)glycinamide from N(1)-(5-phospho-D-ribosyl)glycinamide (formate route): step 1/1. Functionally, involved in the de novo purine biosynthesis. Catalyzes the transfer of formate to 5-phospho-ribosyl-glycinamide (GAR), producing 5-phospho-ribosyl-N-formylglycinamide (FGAR). Formate is provided by PurU via hydrolysis of 10-formyl-tetrahydrofolate. This chain is Formate-dependent phosphoribosylglycinamide formyltransferase, found in Chlorobium phaeobacteroides (strain DSM 266 / SMG 266 / 2430).